The primary structure comprises 50 residues: Acidic phospholipase A2 1 (50 aa).

Positions 27, 29, and 31 each coordinate Ca(2+). Cys-28 and Cys-44 are joined by a disulfide. His-47 is a catalytic residue. Asp-48 contributes to the Ca(2+) binding site.

It belongs to the phospholipase A2 family. Group II subfamily. D49 sub-subfamily. In terms of assembly, monomer. Ca(2+) serves as cofactor. As to expression, expressed by the venom gland.

It localises to the secreted. The catalysed reaction is a 1,2-diacyl-sn-glycero-3-phosphocholine + H2O = a 1-acyl-sn-glycero-3-phosphocholine + a fatty acid + H(+). Snake venom phospholipase A2 (PLA2) that displays a potent enzymatic activity as measured by indirect hemolysis of red blood cells. Is neither lethal when injected into mice nor does it present anticoagulant activity. Displays a moderate inhibitory activity on the aggregation of platelets induced by low levels of ADP, thrombin and arachidonate. In contrast, strongly inhibits platelet aggregation induced by high doses of collagen. Shows myotoxic activity, increases the plasma creatine-kinase activity and induces edema and myonecrosis of mouse skeletal muscles. PLA2 catalyzes the calcium-dependent hydrolysis of the 2-acyl groups in 3-sn-phosphoglycerides. This Lachesis muta muta (Bushmaster) protein is Acidic phospholipase A2 1.